The following is a 300-amino-acid chain: N-carbamoylputrescine amidase (300 aa).

The 259-residue stretch at V8–L266 folds into the CN hydrolase domain. The active-site Proton acceptor is E47. K120 acts as the Proton donor in catalysis. C157 functions as the Nucleophile in the catalytic mechanism.

It belongs to the carbon-nitrogen hydrolase superfamily. Homooctamer.

It catalyses the reaction N-carbamoylputrescine + H2O + 2 H(+) = putrescine + NH4(+) + CO2. The protein operates within amine and polyamine biosynthesis; putrescine biosynthesis via agmatine pathway; putrescine from N-carbamoylputrescine (amidase route): step 1/1. Functionally, involved in polyamine biosynthesis. This is N-carbamoylputrescine amidase (CPA) from Solanum tuberosum (Potato).